The sequence spans 618 residues: 1-deoxy-D-xylulose-5-phosphate synthase (618 aa).

Thiamine diphosphate contacts are provided by residues His76 and 117–119 (GHS). Residue Asp148 participates in Mg(2+) binding. Thiamine diphosphate-binding positions include 149 to 150 (GA), Asn177, Tyr284, and Glu364. Mg(2+) is bound at residue Asn177.

Belongs to the transketolase family. DXPS subfamily. In terms of assembly, homodimer. It depends on Mg(2+) as a cofactor. The cofactor is thiamine diphosphate.

It catalyses the reaction D-glyceraldehyde 3-phosphate + pyruvate + H(+) = 1-deoxy-D-xylulose 5-phosphate + CO2. It functions in the pathway metabolic intermediate biosynthesis; 1-deoxy-D-xylulose 5-phosphate biosynthesis; 1-deoxy-D-xylulose 5-phosphate from D-glyceraldehyde 3-phosphate and pyruvate: step 1/1. Functionally, catalyzes the acyloin condensation reaction between C atoms 2 and 3 of pyruvate and glyceraldehyde 3-phosphate to yield 1-deoxy-D-xylulose-5-phosphate (DXP). This Francisella philomiragia subsp. philomiragia (strain ATCC 25017 / CCUG 19701 / FSC 153 / O#319-036) protein is 1-deoxy-D-xylulose-5-phosphate synthase.